The following is a 242-amino-acid chain: tRNA (guanine-N(1)-)-methyltransferase (242 aa).

S-adenosyl-L-methionine-binding positions include glycine 109 and 129-134; that span reads LGDFVL.

The protein belongs to the RNA methyltransferase TrmD family. As to quaternary structure, homodimer.

Its subcellular location is the cytoplasm. It catalyses the reaction guanosine(37) in tRNA + S-adenosyl-L-methionine = N(1)-methylguanosine(37) in tRNA + S-adenosyl-L-homocysteine + H(+). Specifically methylates guanosine-37 in various tRNAs. This is tRNA (guanine-N(1)-)-methyltransferase from Exiguobacterium sibiricum (strain DSM 17290 / CCUG 55495 / CIP 109462 / JCM 13490 / 255-15).